Reading from the N-terminus, the 106-residue chain is uncharacterized protein (106 aa).

Belongs to the csb family.

This is an uncharacterized protein from Dictyostelium discoideum (Social amoeba).